A 339-amino-acid polypeptide reads, in one-letter code: Ketol-acid reductoisomerase (NADP(+)) (339 aa).

Residues M1–T182 form the KARI N-terminal Rossmann domain. Residues Y24–Q27, R48, S51, S53, and D83–Q86 contribute to the NADP(+) site. The active site involves H108. G134 serves as a coordination point for NADP(+). The 146-residue stretch at N183–I328 folds into the KARI C-terminal knotted domain. Positions 191, 195, 227, and 231 each coordinate Mg(2+). A substrate-binding site is contributed by S252.

This sequence belongs to the ketol-acid reductoisomerase family. Requires Mg(2+) as cofactor.

The catalysed reaction is (2R)-2,3-dihydroxy-3-methylbutanoate + NADP(+) = (2S)-2-acetolactate + NADPH + H(+). It carries out the reaction (2R,3R)-2,3-dihydroxy-3-methylpentanoate + NADP(+) = (S)-2-ethyl-2-hydroxy-3-oxobutanoate + NADPH + H(+). It participates in amino-acid biosynthesis; L-isoleucine biosynthesis; L-isoleucine from 2-oxobutanoate: step 2/4. It functions in the pathway amino-acid biosynthesis; L-valine biosynthesis; L-valine from pyruvate: step 2/4. Involved in the biosynthesis of branched-chain amino acids (BCAA). Catalyzes an alkyl-migration followed by a ketol-acid reduction of (S)-2-acetolactate (S2AL) to yield (R)-2,3-dihydroxy-isovalerate. In the isomerase reaction, S2AL is rearranged via a Mg-dependent methyl migration to produce 3-hydroxy-3-methyl-2-ketobutyrate (HMKB). In the reductase reaction, this 2-ketoacid undergoes a metal-dependent reduction by NADPH to yield (R)-2,3-dihydroxy-isovalerate. In Novosphingobium aromaticivorans (strain ATCC 700278 / DSM 12444 / CCUG 56034 / CIP 105152 / NBRC 16084 / F199), this protein is Ketol-acid reductoisomerase (NADP(+)).